The chain runs to 156 residues: Small ribosomal subunit protein uS7 (156 aa).

It belongs to the universal ribosomal protein uS7 family. In terms of assembly, part of the 30S ribosomal subunit. Contacts proteins S9 and S11.

In terms of biological role, one of the primary rRNA binding proteins, it binds directly to 16S rRNA where it nucleates assembly of the head domain of the 30S subunit. Is located at the subunit interface close to the decoding center, probably blocks exit of the E-site tRNA. The polypeptide is Small ribosomal subunit protein uS7 (Pseudomonas syringae pv. tomato (strain ATCC BAA-871 / DC3000)).